The primary structure comprises 233 residues: Sugar fermentation stimulation protein homolog (233 aa).

Belongs to the SfsA family.

The polypeptide is Sugar fermentation stimulation protein homolog (Chelativorans sp. (strain BNC1)).